Reading from the N-terminus, the 622-residue chain is MEDVEARFAHLLLPIRDLTRNWEVDVAAQLGEYLEELDQICISFDKGKTTMNFIEAALLIQGSACVYSKKVEYLYSLVYQALDFISGKKQAKQLSSTPEDGTIGDASSRAPQEAEQKFRALDDLSDSCANVDLRDDQVVSGTLIPLLPNALVAPDEMEKNSNPLYSCQGEVLASRKDFRVNTCTPHPRGTFLLEPLGVSLMEALQPWNPKEPGRAEEQPMEVSVCGSPGPALSTSQEPGSSPEGPVPRGGGVGEDEEDAEGAAEPPEASAPEVPMEPPEPRSPEQSVAQPRRYTLRERKEAPEPASRLKDTPDPWQGLDPFDSPDSKPFRKGRPYSVPPRVEEAPGQKRKRKGAVKLQDFHQWYLAAYADHTDSRRSRRKGPSFADMEVLYWKHVKEQLETLRKMQRREAAERWLPRAEQGLWPVEEDRLEDSVEDLGAADDFLEPEEYAEPEGAEPGEDADMEAEAMPASLRYEELVQRNVELFVTASKQDVFVTTSRQELVQETELKQHIRGWEDAIQSLLQEQEEHVPFDIHTYGDQVVSRFSQLNQWCPFAKLVAGQPAFEVCRSMLASLQLANDYTVEITQQPGLEAAVDTMSLRLLTHQRARQRFQTYAAPSTVQP.

Thr19 is modified (phosphothreonine). A phosphoserine mark is found at Ser95, Ser199, Ser223, and Ser227. The interval 207-354 (WNPKEPGRAE…PGQKRKRKGA (148 aa)) is disordered. Positions 262–273 (AAEPPEASAPEV) are enriched in low complexity. Phosphoserine is present on Ser282. The segment covering 294-312 (TLRERKEAPEPASRLKDTP) has biased composition (basic and acidic residues).

The protein belongs to the CND2 H2 (condensin-2 subunit 2) family. In terms of assembly, component of the condensin-2 complex, which contains the SMC2 and SMC4 heterodimer, and three non SMC subunits, NCAPG2, NCAPH2 and NCAPD3 that probably regulate the complex.

It is found in the nucleus. Regulatory subunit of the condensin-2 complex, a complex that seems to provide chromosomes with an additional level of organization and rigidity and in establishing mitotic chromosome architecture. May promote the resolution of double-strand DNA catenanes (intertwines) between sister chromatids. Condensin-mediated compaction likely increases tension in catenated sister chromatids, providing directionality for type II topoisomerase-mediated strand exchanges toward chromatid decatenation. Required for decatenation of chromatin bridges at anaphase. Early in neurogenesis, may play an essential role to ensure accurate mitotic chromosome condensation in neuron stem cells, ultimately affecting neuron pool and cortex size. Seems to have lineage-specific role in T-cell development. The chain is Condensin-2 complex subunit H2 (NCAPH2) from Bos taurus (Bovine).